The primary structure comprises 151 residues: Ribosome maturation factor RimP (151 aa).

This sequence belongs to the RimP family.

The protein localises to the cytoplasm. Functionally, required for maturation of 30S ribosomal subunits. The sequence is that of Ribosome maturation factor RimP from Mannheimia succiniciproducens (strain KCTC 0769BP / MBEL55E).